The following is a 122-amino-acid chain: Large ribosomal subunit protein uL14 (122 aa).

It belongs to the universal ribosomal protein uL14 family. Part of the 50S ribosomal subunit. Forms a cluster with proteins L3 and L19. In the 70S ribosome, L14 and L19 interact and together make contacts with the 16S rRNA in bridges B5 and B8.

Binds to 23S rRNA. Forms part of two intersubunit bridges in the 70S ribosome. The sequence is that of Large ribosomal subunit protein uL14 from Exiguobacterium sibiricum (strain DSM 17290 / CCUG 55495 / CIP 109462 / JCM 13490 / 255-15).